Here is a 218-residue protein sequence, read N- to C-terminus: ADP-sugar pyrophosphatase (218 aa).

N-acetylmethionine is present on Met-1. At Ser-10 the chain carries Phosphoserine. Substrate is bound at residue Trp-27. Residue Lys-41 forms a Glycyl lysine isopeptide (Lys-Gly) (interchain with G-Cter in SUMO2) linkage. At Thr-44 the chain carries Phosphothreonine. Substrate is bound by residues 45–46 (WE) and Arg-83. Residues 56-196 (KSADAVSVIP…EQHLTVDAKV (141 aa)) enclose the Nudix hydrolase domain. Ala-95 contacts Mg(2+). Residues 96–117 (GFIEDGESPEAAALRELEEETG) carry the Nudix box motif. Phe-97 serves as a coordination point for substrate. Positions 111 and 115 each coordinate Mg(2+). Position 132 (Asp-132) interacts with substrate. Position 165 (Glu-165) interacts with Mg(2+). Lys-209 and Lys-217 each carry N6-acetyllysine.

The protein belongs to the Nudix hydrolase family. In terms of assembly, homodimer. Interacts with PARG. Requires Mg(2+) as cofactor. Phosphorylation at Thr-44 is required for homodimer stability; dephosphorylation results in destabilization of the homodimer. Dephosphorylation at Thr-44 promotes the ATP-synthesis activity. As to expression, widely expressed. Most abundant in liver.

It localises to the nucleus. The enzyme catalyses D-ribose 5-phosphate + ATP + H(+) = ADP-D-ribose + diphosphate. The catalysed reaction is ADP-D-ribose + H2O = D-ribose 5-phosphate + AMP + 2 H(+). It catalyses the reaction 8-oxo-dGDP + H2O = 8-oxo-dGMP + phosphate + H(+). In terms of biological role, enzyme that can either act as an ADP-sugar pyrophosphatase in absence of diphosphate or catalyze the synthesis of ATP in presence of diphosphate. In absence of diphosphate, hydrolyzes with similar activities various modified nucleoside diphosphates such as ADP-ribose, ADP-mannose, ADP-glucose, 8-oxo-GDP and 8-oxo-dGDP. Can also hydrolyze other nucleotide sugars with low activity. In presence of diphosphate, mediates the synthesis of ATP in the nucleus by catalyzing the conversion of ADP-ribose to ATP and ribose 5-phosphate. Nuclear ATP synthesis takes place when dephosphorylated at Thr-44. Nuclear ATP generation is required for extensive chromatin remodeling events that are energy-consuming. Does not play a role in U8 snoRNA decapping activity. Binds U8 snoRNA. This Mus musculus (Mouse) protein is ADP-sugar pyrophosphatase.